Here is a 157-residue protein sequence, read N- to C-terminus: Small ribosomal subunit protein uS7 (157 aa).

The protein belongs to the universal ribosomal protein uS7 family. Part of the 30S ribosomal subunit. Contacts proteins S9 and S11.

Its function is as follows. One of the primary rRNA binding proteins, it binds directly to 16S rRNA where it nucleates assembly of the head domain of the 30S subunit. Is located at the subunit interface close to the decoding center, probably blocks exit of the E-site tRNA. The chain is Small ribosomal subunit protein uS7 from Chlamydia felis (strain Fe/C-56) (Chlamydophila felis).